Here is a 592-residue protein sequence, read N- to C-terminus: MRTHYCGHLNKSLAGQTVELCGWVNRRRDLGGLIFIDMRDREGIVQVVVDPDMADAYEVANTLRNEFCIKLTGEVRVRPESQVNKDMATGEVEILAKGLEIINRSDVLPLDFNQKNSEEQRLKYRYLDLRRPEMSDRIKLRAKASSFVRRFLDDNGFLDIETPVLTKATPEGARDYLVPSRVHKGSFYALPQSPQLFKQLLMMSGFDRYYQIVKCFRDEDLRADRQPEFTQIDIETSFMTADQVRATTEKMVREMWQELLNVDLGEFPVMPFSEAIRRFGSDKPDLRNPLELVDVADLVKDVEFKVFSGPANDEKGRVAVIRVPGGAELTRKQIDGYAEFVGIYGAKGLAWMKVNDRAAGMEGIQSPVAKFLNEDVINGILDRTQAESGDIILFGADKANIVAEALGALRLKLGKDLDITKEGTWAPLWVVDFPMFEEDDEGNLHAMHHPFTSPLGVTAEELKANPAAANSNAYDMVLNGYEVGGGSVRIHNAEMQAAVFDILGINAEEQQLKFGFLLDALKFGTPPHAGLAFGLDRLVMLLCGTENIRDVIAFPKTTAAACLLTDAPSLANPAALEELAIAVTVAKEKDAE.

Residue E171 coordinates L-aspartate. Residues 195–198 (QLFK) form an aspartate region. Residue R217 coordinates L-aspartate. ATP is bound by residues 217 to 219 (RDE) and Q226. H448 lines the L-aspartate pocket. E482 is an ATP binding site. R489 is a binding site for L-aspartate. 534–537 (GLDR) contributes to the ATP binding site.

This sequence belongs to the class-II aminoacyl-tRNA synthetase family. Type 1 subfamily. Homodimer.

Its subcellular location is the cytoplasm. It catalyses the reaction tRNA(Asp) + L-aspartate + ATP = L-aspartyl-tRNA(Asp) + AMP + diphosphate. Its function is as follows. Catalyzes the attachment of L-aspartate to tRNA(Asp) in a two-step reaction: L-aspartate is first activated by ATP to form Asp-AMP and then transferred to the acceptor end of tRNA(Asp). This chain is Aspartate--tRNA ligase, found in Vibrio campbellii (strain ATCC BAA-1116).